The chain runs to 490 residues: Probable alcohol acetyltransferase FCK4 (490 aa).

Belongs to the alcohol acetyltransferase FCK4 family.

Its pathway is secondary metabolite biosynthesis. Its function is as follows. Probable alcohol acetyltransferase; part of the gene cluster that mediates the biosynthesis of cytokinins such as fusatin, fusatinic acids or 8-oxofusatin, known for their growth promoting and anti-senescence activities toward host plants. FCK1 is a bifunctional enzyme that performs the first steps in the biosynthesis of Fusarium cytokinins. It first condenses adenosine monophosphate (AMP) with dimethylallyl diphosphate (DMAPP) to yield isoprenyl adenosine monophosphate. It then catalyzes the removal of the phosphoribose to produce isopentenylaldehyde. The cytochrome P450 monooxygenase then converts isopentenylaldehyde to trans-zeatin. A condensation step converts trans-zeatin to fusatin which is further modified to produce fusatinic acid. The mechanism for oxidation of fusatin to fusatinic acid remains unknown. 8-oxofusatin could be produced through several pathways, via direct oxygenation of fusatin, or via the 8-oxo-pentenyladenine intermediate which itself must arise from either the prenylation of 8-oxo-AMP by FCK1 and/or oxygenation of isopentenylaldehyde. Both the FCK3 and FCK4 enzymes act downstream of the identified cytokinins to produce yet unidentified compounds. This is Probable alcohol acetyltransferase FCK4 from Fusarium pseudograminearum (strain CS3096) (Wheat and barley crown-rot fungus).